Consider the following 187-residue polypeptide: Ribosome-recycling factor (187 aa).

It belongs to the RRF family.

It is found in the cytoplasm. Responsible for the release of ribosomes from messenger RNA at the termination of protein biosynthesis. May increase the efficiency of translation by recycling ribosomes from one round of translation to another. This chain is Ribosome-recycling factor, found in Bradyrhizobium sp. (strain ORS 278).